A 29-amino-acid chain; its full sequence is Cytochrome c oxidase subunit 7A1, mitochondrial (29 aa).

Over residues 1 to 13 the composition is skewed to basic and acidic residues; sequence LENRVAEKQKLFQ. Residues 1-29 form a disordered region; sequence LENRVAEKQKLFQEDNGLPVHLKGGATDN.

The protein belongs to the cytochrome c oxidase VIIa family. Component of the complex IV (CIV, cytochrome c oxidase), a multisubunit enzyme composed of 14 subunits. The complex is composed of a catalytic core of 3 subunits MT-CO1, MT-CO2 and MT-CO3, encoded in the mitochondrial DNA, and 11 supernumerary subunits COX4I1 (or COX4I2), COX5A, COX5B, COX6A2 (or COX6A1), COX6B1 (or COX6B2), COX6C, COX7A1 (or COX7A2), COX7B, COX7C, COX8B and NDUFA4, which are encoded in the nuclear genome. The complex exists as a monomer or a dimer and forms supercomplexes (SCs) in the inner mitochondrial membrane with NADH-ubiquinone oxidoreductase (complex I, CI) and ubiquinol-cytochrome c oxidoreductase (cytochrome b-c1 complex, complex III, CIII), resulting in different assemblies (supercomplex SCI(1)III(2)IV(1) and megacomplex MCI(2)III(2)IV(2)).

The protein resides in the mitochondrion inner membrane. Its pathway is energy metabolism; oxidative phosphorylation. Its function is as follows. Component of the mitochondrial respiratory complex IV (CIV, also named cytochrome c oxidase complex), the last enzyme in the mitochondrial electron transport chain which drives oxidative phosphorylation. The CIV complex is the component of the respiratory chain that catalyzes the reduction of oxygen to water. Acts as an assembly factor that specifically drives the homodimerization of CIV complexes, mediating the formation of mitochondrial respiratory supercomplexes (respirasomes) containing two CIV: supercomplxes with two molecules of CIV show improved activity. Despite being highly expressed in brown adipose tissue, not required for thermogenesis. The sequence is that of Cytochrome c oxidase subunit 7A1, mitochondrial (COX7A1) from Ovis aries (Sheep).